The following is a 107-amino-acid chain: Guanine nucleotide-binding protein G(I)/G(S)/G(O) subunit gamma-14 (107 aa).

The 39-residue stretch at Lys-69–Leu-107 folds into the G protein gamma domain.

This sequence belongs to the G protein gamma family. G proteins are composed of 3 units; alpha, beta and gamma.

The protein localises to the cell membrane. Its function is as follows. Guanine nucleotide-binding proteins (G proteins) are involved as a modulator or transducer in various transmembrane signaling systems. The beta and gamma chains are required for the GTPase activity, for replacement of GDP by GTP, and for G protein-effector interaction. The polypeptide is Guanine nucleotide-binding protein G(I)/G(S)/G(O) subunit gamma-14 (Homo sapiens (Human)).